Consider the following 328-residue polypeptide: Flagellar motor switch protein FliM (328 aa).

The interaction with unphosphorylated CheY stretch occupies residues 1–45 (MSDVLSQEEINQLIEALMKGELKEEDLLKEEEEKKVKPYDFKRPS).

This sequence belongs to the FliM family. In terms of assembly, interacts (via N-terminus) with unphosphorylated CheY. Interacts (via central domain) with FliG (via central domain or via central domain and C-terminus).

It localises to the cell inner membrane. The protein localises to the bacterial flagellum basal body. Its function is as follows. FliM is one of three proteins (FliG, FliN, FliM) that forms the rotor-mounted switch complex (C ring), located at the base of the basal body. This complex interacts with the CheY and CheX chemotaxis proteins, in addition to contacting components of the motor that determine the direction of flagellar rotation. The sequence is that of Flagellar motor switch protein FliM from Thermotoga maritima (strain ATCC 43589 / DSM 3109 / JCM 10099 / NBRC 100826 / MSB8).